Reading from the N-terminus, the 457-residue chain is Probable xyloglucan 6-xylosyltransferase 3 (457 aa).

Residues 1-40 (MGKEDGFRTQKRVSTASSAAAGVLPTTMASGGVRRPPPRG) form a disordered region. Residues 1 to 51 (MGKEDGFRTQKRVSTASSAAAGVLPTTMASGGVRRPPPRGRQIQKTFNNVK) lie on the Cytoplasmic side of the membrane. Residues 52–71 (MTILCGFVTILVLRGTIGIN) form a helical; Signal-anchor for type II membrane protein membrane-spanning segment. Over 72-457 (FGTSDADVVN…TTPLKIEARS (386 aa)) the chain is Lumenal. Asparagine 115 and asparagine 431 each carry an N-linked (GlcNAc...) asparagine glycan.

The protein belongs to the glycosyltransferase 34 family.

It is found in the golgi apparatus membrane. It catalyses the reaction Transfers an alpha-D-xylosyl residue from UDP-D-xylose to a glucose residue in xyloglucan, forming an alpha-(1-&gt;6)-D-xylosyl-D-glucose linkage.. Probable xyloglucan xylosyltransferase involved in the biosynthesis of xyloglucan. This is Probable xyloglucan 6-xylosyltransferase 3 from Arabidopsis thaliana (Mouse-ear cress).